A 956-amino-acid chain; its full sequence is Endogenous retrovirus group K member 8 Pol protein (956 aa).

Residues 57 to 245 (LEKGHIEPSF…TPFHYLGMQI (189 aa)) enclose the Reverse transcriptase domain. The LPQG signature appears at 161–164 (LPQG). The YXDD motif lies at 195–198 (YIDD). The RNase H type-1 domain maps to 460-590 (LENALTVFTD…ADLLVSSALI (131 aa)). Asp-469, Glu-497, Asp-517, and Asp-582 together coordinate Mg(2+). The Integrase-type zinc finger occupies 587–628 (SALIKAQELHALTHVNAAGLKNKFDVTWKQAKDIVQHCTQCQ). The Zn(2+) site is built by His-596, His-600, Cys-624, and Cys-627. The region spanning 642–803 (RGLCPNALWQ…TSAEQHLTGK (162 aa)) is the Integrase catalytic domain. A DNA-binding region (integrase-type) is located at residues 811-859 (KLIWWKDNKNKTWEIGKVITWGRGFACVSPGENQLPVWIPTRHLKFYNE). The interval 864 to 890 (AKKSTSAETETPQSSTVDSQDEQNGDV) is disordered. Residues 869–881 (SAETETPQSSTVD) are compositionally biased toward polar residues.

The protein belongs to the beta type-B retroviral polymerase family. HERV class-II K(HML-2) pol subfamily.

The catalysed reaction is DNA(n) + a 2'-deoxyribonucleoside 5'-triphosphate = DNA(n+1) + diphosphate. It catalyses the reaction Endonucleolytic cleavage to 5'-phosphomonoester.. In terms of biological role, early post-infection, the reverse transcriptase converts the viral RNA genome into double-stranded viral DNA. The RNase H domain of the reverse transcriptase performs two functions. It degrades the RNA template and specifically removes the RNA primer from the RNA/DNA hybrid. Following nuclear import, the integrase catalyzes the insertion of the linear, double-stranded viral DNA into the host cell chromosome. Endogenous Pol proteins may have kept, lost or modified their original function during evolution. The protein is Endogenous retrovirus group K member 8 Pol protein (ERVK-8) of Homo sapiens (Human).